We begin with the raw amino-acid sequence, 144 residues long: MKKVAGLVKLQLPAGKATPAPPVGPALGQYGANIMEFTKAFNAQTADKGDAIIPVEITIYADRSFTFITKTPPMSYLIRKAAGLQKGSATPNKAKVGKLNWEQVLEIARTKMPDLNAGSVEAAANTVAGTARSMGVTIEGAPHA.

Belongs to the universal ribosomal protein uL11 family. Part of the ribosomal stalk of the 50S ribosomal subunit. Interacts with L10 and the large rRNA to form the base of the stalk. L10 forms an elongated spine to which L12 dimers bind in a sequential fashion forming a multimeric L10(L12)X complex. One or more lysine residues are methylated.

Its function is as follows. Forms part of the ribosomal stalk which helps the ribosome interact with GTP-bound translation factors. The chain is Large ribosomal subunit protein uL11 from Deinococcus geothermalis (strain DSM 11300 / CIP 105573 / AG-3a).